We begin with the raw amino-acid sequence, 1158 residues long: Nuclear receptor-interacting protein 1 (1158 aa).

The interaction with ZNF366 stretch occupies residues 1–415 (MTHGEELGSD…EESSTPTTID (415 aa)). The LXXLL motif 1 motif lies at 21–25 (LEGLL). The segment at 33–56 (SGTAVDKKSAGHNEEDQNFNISGS) is disordered. Positions 37–47 (VDKKSAGHNEE) are enriched in basic and acidic residues. A repression domain 1 region spans residues 78–333 (MLHLKKARLL…HLNGQARTSS (256 aa)). Residue Ser104 is modified to Phosphoserine. Lys111 carries the post-translational modification N6-acetyllysine; alternate. A Glycyl lysine isopeptide (Lys-Gly) (interchain with G-Cter in SUMO2); alternate cross-link involves residue Lys111. An LXXLL motif 2 motif is present at residues 133-137 (LASLL). An N6-acetyllysine modification is found at Lys158. A Glycyl lysine isopeptide (Lys-Gly) (interchain with G-Cter in SUMO2) cross-link involves residue Lys170. Residues 185–189 (LKTLL) carry the LXXLL motif 3 motif. Residues Lys195 and Lys198 each participate in a glycyl lysine isopeptide (Lys-Gly) (interchain with G-Cter in SUMO2) cross-link. The residue at position 207 (Thr207) is a Phosphothreonine. Phosphoserine is present on Ser218. An LXXLL motif 4 motif is present at residues 266 to 270 (LALLL). Residues Lys286 and Lys310 each carry the N6-acetyllysine modification. Phosphoserine is present on Ser356. Lys372 is covalently cross-linked (Glycyl lysine isopeptide (Lys-Gly) (interchain with G-Cter in SUMO2)). A Phosphoserine modification is found at Ser378. The LXXLL motif 5 motif lies at 380 to 384 (LLHLL). Residues 393–435 (MNGHSHSERGSIFEESSTPTTIDEYSDNNPSFTDDSSGDESSY) form a disordered region. The segment covering 406–435 (EESSTPTTIDEYSDNNPSFTDDSSGDESSY) has biased composition (polar residues). Positions 410–700 (TPTTIDEYSD…PTGPEPGLSG (291 aa)) are repression domain 2. A required for targeting to small nuclear foci region spans residues 431–472 (DESSYSNCVPIDLSCKHRTEKSESDQPVSLDNFTQSLLNTWD). A CTBP-binding; principal site motif is present at residues 440–446 (PIDLSCK). An N6-acetyllysine mark is found at Lys446 and Lys481. Ser487 is modified (phosphoserine). The short motif at 500–504 (LLQLL) is the LXXLL motif 6 element. Lys508 is covalently cross-linked (Glycyl lysine isopeptide (Lys-Gly) (interchain with G-Cter in SUMO2)). At Ser518 the chain carries Phosphoserine. At Lys528 the chain carries N6-acetyllysine. Residues 540-563 (IESPSTNRTTPVSTPPLLTSSKAG) form a disordered region. Phosphoserine is present on Ser542. Positions 548–560 (TTPVSTPPLLTSS) are enriched in low complexity. Position 564 is a phosphoserine (Ser564). 2 consecutive short sequence motifs (CTBP-binding) follow at residues 565–569 (PINLS) and 599–603 (SMDLT). Disordered stretches follow at residues 592 to 622 (TNTASNHSMDLTKSKDPPGEKPAQNEGAQNS) and 641 to 663 (SSMSVEEQRPSKQLLTGNTDKPI). The segment covering 601-610 (DLTKSKDPPG) has biased composition (basic and acidic residues). Lys606 is subject to N6-acetyllysine. The span at 641 to 659 (SSMSVEEQRPSKQLLTGNT) shows a compositional bias: polar residues. Ser671 carries the post-translational modification Phosphoserine. The LXXLL motif 7 signature appears at 713–717 (LQLLL). Residues 716–745 (LLGNPNKGKSEKKEKTPLRDESTQEHSERA) are disordered. Residues 723–745 (GKSEKKEKTPLRDESTQEHSERA) are compositionally biased toward basic and acidic residues. The segment at 735–885 (DESTQEHSER…NIVDAANNHS (151 aa)) is repression domain 3. The interaction with ZNF366 stretch occupies residues 753-1158 (VKIKSEPCDD…SVLTIKKESE (406 aa)). Residues Lys756 and Lys802 each participate in a glycyl lysine isopeptide (Lys-Gly) (interchain with G-Cter in SUMO2) cross-link. Residue Ser807 is modified to Phosphoserine. The LXXLL motif 8 signature appears at 819-823 (LSRLL). Residues Lys850 and Lys901 each participate in a glycyl lysine isopeptide (Lys-Gly) (interchain with G-Cter in SUMO2) cross-link. N6-acetyllysine; alternate is present on Lys931. Lys931 is covalently cross-linked (Glycyl lysine isopeptide (Lys-Gly) (interchain with G-Cter in SUMO2); alternate). The short motif at 936–940 (LKQLL) is the LXXLL motif 9 element. Residues 946-950 (VRDLS) carry the CTBP-binding motif. Residues 950-974 (SPHRSNSVADSKKKGHKNNVTNSKP) are disordered. A Phosphoserine modification is found at Ser1001. The Ligand-dependent nuclear receptor binding signature appears at 1061-1074 (LTKTNPILYYMLQK). Glycyl lysine isopeptide (Lys-Gly) (interchain with G-Cter in SUMO2) cross-links involve residues Lys1105, Lys1115, and Lys1154. Residues 1118–1158 (FFNLRSPYNSHMGNNASRPHSANGEVYGLLGSVLTIKKESE) are repression domain 4.

In terms of assembly, interacts with RARA and RXRB homodimers and RARA/RXRB heterodimers in the presence of ligand. Interacts with HDAC1 and HDAC3 via its N-terminal domain. Interacts with NR2C1 (sumoylated form and via the ligand-binding domain); the interaction results in promoting the repressor activity of NR2C1. Interacts with CTBP1, CTBP2, ESR1, HDAC1, HDAC2, HDAC5, HDAC6, NR2C2, NR3C1, NR3C2, YWHAH, JUN and FOS. Found in a complex with both NR3C1 and YWHAH. Interacts with ZNF366. Interacts with RORA. In terms of processing, acetylation regulates its nuclear translocation and corepressive activity. Acetylation abolishes interaction with CTBP1. Phosphorylation enhances interaction with YWHAH.

The protein localises to the nucleus. Its function is as follows. Modulates transcriptional activation by steroid receptors such as NR3C1, NR3C2 and ESR1. Also modulates transcriptional repression by nuclear hormone receptors. Positive regulator of the circadian clock gene expression: stimulates transcription of BMAL1, CLOCK and CRY1 by acting as a coactivator for RORA and RORC. Involved in the regulation of ovarian function. Plays a role in renal development. The polypeptide is Nuclear receptor-interacting protein 1 (NRIP1) (Homo sapiens (Human)).